Here is a 390-residue protein sequence, read N- to C-terminus: MKATILASTFAAGALAQSGAWGQCGGNGWSGATSCISGYACNYVNDWYSQCQPGTAAPTTTAAATTLVTSTKTAPPASTTTATASGKFKWFGVNEAGGEFGDGIFPGRWGTEFTFPDTNTIQTLRSQGYNIFRVGFAMERLVPNTLTSSFDNGYLTNLTQVVNSVTNSGAYIVLDPHNYGRYYGKIITDTDAFKTFWQNVAAKFASNSKVIFDTNNEYNTMDQTLVLNLNQAAIDGIRAAGATSQYIFVEGNQWTGAWSWNVTNTNLAALTDPENKIVYEMHQYLDSDSSGTSTACVSSEIGVQRIVGATAWLRANGKKGVLGEFAGGANSVCKAAVTGLLEHLKANTDVWEGALWWAAGPWWGDYMYSFEPPSGTGYTYYNSLLKTYTP.

An N-terminal signal peptide occupies residues 1-16 (MKATILASTFAAGALA). The CBM1 domain occupies 17–52 (QSGAWGQCGGNGWSGATSCISGYACNYVNDWYSQCQ). N-linked (GlcNAc...) asparagine glycans are attached at residues Asn-157 and Asn-261.

Belongs to the glycosyl hydrolase 5 (cellulase A) family. Post-translationally, N-glycosylated.

It is found in the secreted. The enzyme catalyses Endohydrolysis of (1-&gt;4)-beta-D-glucosidic linkages in cellulose, lichenin and cereal beta-D-glucans.. Functionally, endoglucanase that plays an important role in biomass degradation. Binds onto plant cell walls to participate in the hydrolysis of cellulose. The protein is Endoglucanase gh5-1 of Neurospora crassa (strain ATCC 24698 / 74-OR23-1A / CBS 708.71 / DSM 1257 / FGSC 987).